A 496-amino-acid polypeptide reads, in one-letter code: Glutamyl-tRNA(Gln) amidotransferase subunit A (496 aa).

Active-site charge relay system residues include K75 and S150. The active-site Acyl-ester intermediate is S174.

This sequence belongs to the amidase family. GatA subfamily. As to quaternary structure, heterotrimer of A, B and C subunits.

The enzyme catalyses L-glutamyl-tRNA(Gln) + L-glutamine + ATP + H2O = L-glutaminyl-tRNA(Gln) + L-glutamate + ADP + phosphate + H(+). Functionally, allows the formation of correctly charged Gln-tRNA(Gln) through the transamidation of misacylated Glu-tRNA(Gln) in organisms which lack glutaminyl-tRNA synthetase. The reaction takes place in the presence of glutamine and ATP through an activated gamma-phospho-Glu-tRNA(Gln). The protein is Glutamyl-tRNA(Gln) amidotransferase subunit A of Burkholderia ambifaria (strain ATCC BAA-244 / DSM 16087 / CCUG 44356 / LMG 19182 / AMMD) (Burkholderia cepacia (strain AMMD)).